Consider the following 484-residue polypeptide: Chromosomal replication initiator protein DnaA (484 aa).

A domain I, interacts with DnaA modulators region spans residues 1 to 73 (MQEGKNIWSL…EILIEKGHNT (73 aa)). Residues 73–140 (TINVEFINSP…EEIHTKYRNP (68 aa)) are domain II. The tract at residues 141–357 (FLKKKYTFEN…AAVTKLKAHI (217 aa)) is domain III, AAA+ region. Positions 185, 187, 188, and 189 each coordinate ATP. The tract at residues 358–484 (DLEDIEIDTS…IELMNKINKK (127 aa)) is domain IV, binds dsDNA.

It belongs to the DnaA family. In terms of assembly, oligomerizes as a right-handed, spiral filament on DNA at oriC.

Its subcellular location is the cytoplasm. Functionally, plays an essential role in the initiation and regulation of chromosomal replication. ATP-DnaA binds to the origin of replication (oriC) to initiate formation of the DNA replication initiation complex once per cell cycle. Binds the DnaA box (a 9 base pair repeat at the origin) and separates the double-stranded (ds)DNA. Forms a right-handed helical filament on oriC DNA; dsDNA binds to the exterior of the filament while single-stranded (ss)DNA is stabiized in the filament's interior. The ATP-DnaA-oriC complex binds and stabilizes one strand of the AT-rich DNA unwinding element (DUE), permitting loading of DNA polymerase. After initiation quickly degrades to an ADP-DnaA complex that is not apt for DNA replication. Binds acidic phospholipids. The sequence is that of Chromosomal replication initiator protein DnaA from Borrelia hermsii (strain HS1 / DAH).